The primary structure comprises 184 residues: Mitochondrial import inner membrane translocase subunit TIM22 (184 aa).

A disordered region spans residues 1-26; sequence MSLWGVYTGPQPPKKPLQEMTQEEQA. 2 disulfide bridges follow: Cys40–Cys118 and Cys137–Cys156. Transmembrane regions (helical) follow at residues 45–65 and 151–171; these read VMAG…MASM and AALV…MYLN.

The protein belongs to the Tim17/Tim22/Tim23 family. Component of the TIM22 complex, whose core is composed of TIM22 and TIM54, associated with the 70 kDa heterohexamer composed of TIM9 and TIM10 (or TIM8 and TIM13).

The protein resides in the mitochondrion inner membrane. Its function is as follows. Essential core component of the TIM22 complex, a complex that mediates the import and insertion of multi-pass transmembrane proteins into the mitochondrial inner membrane. In the TIM22 complex, it constitutes the voltage-activated and signal-gated channel. Forms a twin-pore translocase that uses the membrane potential as external driving force in 2 voltage-dependent steps. This Candida albicans (strain SC5314 / ATCC MYA-2876) (Yeast) protein is Mitochondrial import inner membrane translocase subunit TIM22.